Reading from the N-terminus, the 5911-residue chain is Nonribosomal peptide synthetase 30 (5911 aa).

The tract at residues 1-22 (MVPEKPTAQSKSGIGEPFRAGD) is disordered. Residues 352–754 (ALIQPSSTAV…GRKDAQVKIR (403 aa)) form an adenylation 1 region. The Carrier 1 domain occupies 891 to 968 (PRPFSVEYSL…EAAAIVARGT (78 aa)). The residue at position 928 (serine 928) is an O-(pantetheine 4'-phosphoryl)serine. The interval 1007 to 1422 (EDAFPCTPLQ…ERLIFVIDQL (416 aa)) is condensation 1. The tract at residues 1467 to 1865 (ERALSQPDRP…SLMFVGRKAD (399 aa)) is adenylation 2. The 77-residue stretch at 2001–2077 (QPTSELEAEM…NICSHSYYCS (77 aa)) folds into the Carrier 2 domain. Position 2038 is an O-(pantetheine 4'-phosphoryl)serine (serine 2038). The segment at 2121–2538 (QDAYPCTPLQ…GPDINMSDIG (418 aa)) is condensation 2. Residues 2568 to 2977 (EEQARLRPEA…GRKDSQVKIR (410 aa)) form an adenylation 3 region. One can recognise a Carrier 3 domain in the interval 3110-3186 (QPSTNAQREL…LIADNSKSIK (77 aa)). Serine 3147 carries the post-translational modification O-(pantetheine 4'-phosphoryl)serine. The condensation 3 stretch occupies residues 3227–3652 (VQDAYPCTPL…LELVIQAFMA (426 aa)). Positions 3701 to 4108 (EERVREQPNA…GRKDSQVKIR (408 aa)) are adenylation 4. Positions 4248-4325 (PPTTPLECQM…DIIATMTKNK (78 aa)) constitute a Carrier 4 domain. Serine 4285 carries the O-(pantetheine 4'-phosphoryl)serine modification. The interval 4326-4347 (ATGASRRLPRDDDEPIPHTKYA) is disordered. The segment at 4353 to 4793 (SYAQGRLWFL…SLPLLTEDGR (441 aa)) is condensation 4. Residues 4819–5231 (FKEQVSRHPN…GRMDVQVKIR (413 aa)) are adenylation 5. The Carrier 5 domain maps to 5360–5436 (KPTTDMEVAL…ALARRQEEIV (77 aa)). An O-(pantetheine 4'-phosphoryl)serine modification is found at serine 5397. Residues 5474–5828 (VEDMLPLTSM…GIKMKLHFFT (355 aa)) form a condensation 5 region.

Belongs to the NRP synthetase family.

The protein operates within secondary metabolite biosynthesis. In terms of biological role, nonribosomal peptide synthetase; part of the gene cluster that mediates the biosynthesis of sansalvamide, a cyclic pentadepsipeptide that shows promising results as potential anti-cancer drug. The nonribosmal peptide synthetase NRPS30 produces sansalvamide by incorporating successively one phenylalanine, one leucine, one alpha-hydroxyisocaproic acid (HICA), one valine and one leucine before sansalvamide is released from by cyclization by the terminal C domain of NRPS30. The HICA residue is probably provided by reduction of alpha-ketoisocaproate by the cluster-specific aldo-keto reductase (NECHADRAFT_45914). The polypeptide is Nonribosomal peptide synthetase 30 (Fusarium vanettenii (strain ATCC MYA-4622 / CBS 123669 / FGSC 9596 / NRRL 45880 / 77-13-4) (Fusarium solani subsp. pisi)).